Consider the following 333-residue polypeptide: DNA-directed RNA polymerase subunit alpha (333 aa).

Residues 1 to 233 form an alpha N-terminal domain (alpha-NTD) region; sequence MVREKVRVST…DLFIPFLHAE (233 aa). Residues 266–333 form an alpha C-terminal domain (alpha-CTD) region; that stretch reads KKEIAFKSIF…DILEIEKHFP (68 aa).

This sequence belongs to the RNA polymerase alpha chain family. In plastids the minimal PEP RNA polymerase catalytic core is composed of four subunits: alpha, beta, beta', and beta''. When a (nuclear-encoded) sigma factor is associated with the core the holoenzyme is formed, which can initiate transcription.

The protein localises to the plastid. It localises to the chloroplast. It carries out the reaction RNA(n) + a ribonucleoside 5'-triphosphate = RNA(n+1) + diphosphate. In terms of biological role, DNA-dependent RNA polymerase catalyzes the transcription of DNA into RNA using the four ribonucleoside triphosphates as substrates. The sequence is that of DNA-directed RNA polymerase subunit alpha from Lotus japonicus (Lotus corniculatus var. japonicus).